A 631-amino-acid chain; its full sequence is Protein FRIABLE 1 (631 aa).

A compositionally biased stretch (low complexity) spans 1–13; the sequence is MSVGVPVNPSSSS. The tract at residues 1 to 36 is disordered; the sequence is MSVGVPVNPSSSSQLPAAPTTTTRRRVADSQEDHSH. Topologically, residues 1-120 are cytoplasmic; the sequence is MSVGVPVNPS…NMRSTTNLGR (120 aa). Over residues 26 to 36 the composition is skewed to basic and acidic residues; sequence RVADSQEDHSH. A helical; Signal-anchor for type II membrane protein transmembrane segment spans residues 121 to 141; sequence FILTLLSILVVTFFLIVALSG. At 142-631 the chain is on the lumenal side; sequence GVGRRRKHVE…RPSLRAQSLR (490 aa). Asn-246, Asn-329, and Asn-364 each carry an N-linked (GlcNAc...) asparagine glycan. Substrate is bound at residue 384-386; the sequence is HLR. N-linked (GlcNAc...) asparagine glycosylation is found at Asn-398 and Asn-425.

The protein belongs to the glycosyltransferase GT106 family. As to expression, ubiquitous. Strong expression in young seedlings, particularly at the junction between hypocotyl and root, in emerging cotyledons, and in parts of the roots. Also detected in the inflorescence (sepals, petals, mature pollen and siliques) and rosette leaves.

The protein localises to the golgi apparatus membrane. Its pathway is glycan metabolism. Its function is as follows. Glycosyltransferase required for normal cell adhesion and cell wall integrity. The chain is Protein FRIABLE 1 from Arabidopsis thaliana (Mouse-ear cress).